Reading from the N-terminus, the 50-residue chain is MKAIMVLFYVMTLTIIGSFSMVSGSPGQNDYVNPKLQFACDLLQKAKERQ.

A signal peptide spans 1–26 (MKAIMVLFYVMTLTIIGSFSMVSGSP).

As to quaternary structure, dimer; disulfide-linked. As to expression, expressed in venom sac and, to a lesser extent, in venom gland. Not expressed in brain.

The protein localises to the secreted. Amphipathic peptide which probably adopts an alpha-helical structure. Has no antimicrobial activity against E.coli DH5alpha or B.thuringiensis. Is not cytotoxic in vitro. This is Ampulexin 2 from Ampulex compressa (Emerald cockroach wasp).